The following is a 307-amino-acid chain: tRNA pseudouridine synthase B (307 aa).

The Nucleophile role is filled by Asp-41.

The protein belongs to the pseudouridine synthase TruB family. Type 1 subfamily.

The enzyme catalyses uridine(55) in tRNA = pseudouridine(55) in tRNA. Functionally, responsible for synthesis of pseudouridine from uracil-55 in the psi GC loop of transfer RNAs. The chain is tRNA pseudouridine synthase B from Prochlorococcus marinus (strain MIT 9312).